We begin with the raw amino-acid sequence, 249 residues long: Type III pantothenate kinase (249 aa).

6–13 serves as a coordination point for ATP; sequence DVGNTHTT. Residue 101–104 participates in substrate binding; that stretch reads GADR. Aspartate 103 serves as the catalytic Proton acceptor. Aspartate 123 lines the K(+) pocket. Threonine 126 contacts ATP. Threonine 177 is a substrate binding site.

The protein belongs to the type III pantothenate kinase family. Homodimer. Requires NH4(+) as cofactor. K(+) serves as cofactor.

The protein resides in the cytoplasm. The catalysed reaction is (R)-pantothenate + ATP = (R)-4'-phosphopantothenate + ADP + H(+). It functions in the pathway cofactor biosynthesis; coenzyme A biosynthesis; CoA from (R)-pantothenate: step 1/5. Its function is as follows. Catalyzes the phosphorylation of pantothenate (Pan), the first step in CoA biosynthesis. This chain is Type III pantothenate kinase, found in Thermosipho africanus (strain TCF52B).